The chain runs to 69 residues: Large ribosomal subunit protein uL29 (69 aa).

This sequence belongs to the universal ribosomal protein uL29 family.

The sequence is that of Large ribosomal subunit protein uL29 from Staphylococcus saprophyticus subsp. saprophyticus (strain ATCC 15305 / DSM 20229 / NCIMB 8711 / NCTC 7292 / S-41).